A 103-amino-acid polypeptide reads, in one-letter code: Insulin (103 aa).

The N-terminal stretch at 1-20 is a signal peptide; sequence IQSLPLLALLALSGPGTSHA. 3 cysteine pairs are disulfide-bonded: cysteine 27-cysteine 89, cysteine 39-cysteine 102, and cysteine 88-cysteine 93. A propeptide spans 53–80 (c peptide); that stretch reads DAEHPLVNGPLHGEVGDLPFQQEEFEKV.

Belongs to the insulin family. As to quaternary structure, heterodimer of a B chain and an A chain linked by two disulfide bonds.

It is found in the secreted. Insulin decreases blood glucose concentration. It increases cell permeability to monosaccharides, amino acids and fatty acids. It accelerates glycolysis, the pentose phosphate cycle, and glycogen synthesis in liver. This chain is Insulin (INS), found in Selasphorus rufus (Rufous hummingbird).